Consider the following 259-residue polypeptide: Peroxisomal membrane protein 11B (259 aa).

K43 carries the post-translational modification N6-acetyllysine. A disordered region spans residues 157-176; sequence LKGSGGGVPGGSETGGLGGP. Residues 159–176 show a composition bias toward gly residues; that stretch reads GSGGGVPGGSETGGLGGP. An interaction with PEX19, PEX11G and FIS1 and peroxisome targeting region spans residues 211–259; sequence VVRNACDLFIPLDKLGLWRCGPGIVGLCGLVSSILSILTLIYPWLRLKP. The chain crosses the membrane as a helical span at residues 233-255; sequence GIVGLCGLVSSILSILTLIYPWL.

Belongs to the peroxin-11 family. Homodimer. Heterodimer with PEX11G. Interacts with PEX19. Interacts with FIS1.

It is found in the peroxisome membrane. Involved in peroxisomal proliferation. May regulate peroxisome division by recruiting the dynamin-related GTPase DNM1L to the peroxisomal membrane. Promotes membrane protrusion and elongation on the peroxisomal surface. The sequence is that of Peroxisomal membrane protein 11B (PEX11B) from Homo sapiens (Human).